The following is a 423-amino-acid chain: uncharacterized protein (423 aa).

The protein belongs to the mycobacterial PPE family.

Could be required for host endothelial-cell invasion and/or intracellular survival. This is an uncharacterized protein from Mycobacterium tuberculosis (strain CDC 1551 / Oshkosh).